Reading from the N-terminus, the 487-residue chain is 1,4-beta-D-glucan cellobiohydrolase CEL6A (487 aa).

The first 17 residues, 1–17 (MASKLFLAAALLQGALS), serve as a signal peptide directing secretion. A CBM1 domain is found at 27–63 (ACAAQWGQCGGQDYTGPTCCQSGSTCVVSNQWYSQCL). 2 cysteine pairs are disulfide-bonded: cysteine 35–cysteine 52 and cysteine 46–cysteine 62. Residues 64–117 (PGSSNPTTTSRTSTSSSSSTSRTSSSTSRPPSSVPTTPTSVPPTITTTPTTTPT) show a composition bias toward low complexity. The interval 64-127 (PGSSNPTTTS…GGSGPGTTAS (64 aa)) is disordered. Residues tryptophan 175 and aspartate 177 each contribute to the substrate site. Aspartate 216 is a catalytic residue. The active-site Proton donor is the aspartate 262. Positions 307, 310, 346, 407, 435, and 439 each coordinate substrate. Catalysis depends on aspartate 441, which acts as the Proton acceptor.

This sequence belongs to the glycosyl hydrolase 6 (cellulase B) family.

The protein localises to the secreted. The enzyme catalyses Hydrolysis of (1-&gt;4)-beta-D-glucosidic linkages in cellulose and cellotetraose, releasing cellobiose from the non-reducing ends of the chains.. Exoglucanase that plays an important function in biomass degradation by catalyzing the hydrolysis of the non-reducing end beta-1,4-glucosidic linkages in cellulose and cellotetraose to release cellobiose. Shows higher hydrolytic activities on phosphoric acid-swollen cellulose (PSC), beta-glucan, and cellooligosaccharide derivatives than on cellulose, of which the best substrates were cellooligosaccharides. This is 1,4-beta-D-glucan cellobiohydrolase CEL6A from Pyricularia oryzae (strain 70-15 / ATCC MYA-4617 / FGSC 8958) (Rice blast fungus).